A 599-amino-acid polypeptide reads, in one-letter code: MTKDELKALGWDRCDVVIVSGDAYVDHPSFGVAIIGRVLEKAGFRVGIIAQPDVTDKTSFSRLGEPRLCFCVTSGNVDSMVNNYTANKRLRSDDDYSPGNRPHMRPDRAVTVYCNKIRETYKTIPIITGGLEASLRRFAHYDYWDDKVRQSILADAPADMIVYGMGEKTIVDVVGRLKNGERIADITDIRGTTYKTRKIGDLSDFIELPDFKAVSTDKRAFAEAFKTFYDEQDPYYGHTLVQRHPKTIIVQNPPALPLTTAEMDAIYDLPYTRYPHPSYKEDIPALRTVRFSITSHRGCFGGCAFCAITAHQGRMIQSRSQESILREIRALTKLPEFKGTISDIGGPTADMYMLGCSKRSTQGMCRDKLCLYPEPCPNLNKDHSRLITLLNEVRKVPGVKNVFIGSGIRYDLAMQDEQYLYHICRQNVSGQLKVAPEHVSRNVTDAMCKPSIEAYDKFVSKYREINKELGKEQYIIPYFISAHPGCTLKDAIQLAEYVRDMGYYVEQVQDFTPTPSTLSTCMYYTGYNPYTGQEVYVPKSVEERRMYRALLQYKNPENYDLVKKALISANRKDLIGYGQNCLIKPVRPAIYKKPGRRKP.

Residues 281 to 557 form the Radical SAM core domain; the sequence is EDIPALRTVR…RALLQYKNPE (277 aa). [4Fe-4S] cluster is bound by residues cysteine 299, cysteine 303, and cysteine 306.

This sequence belongs to the UPF0313 family. Requires [4Fe-4S] cluster as cofactor.

The protein is UPF0313 protein UNCMA_01890 of Methanocella arvoryzae (strain DSM 22066 / NBRC 105507 / MRE50).